A 393-amino-acid chain; its full sequence is Cysteine protease ATG4B (393 aa).

Met1 bears the N-acetylmethionine mark. Ser34 carries the phosphoserine modification. Cys74 functions as the Nucleophile in the catalytic mechanism. An S-nitrosocysteine modification is found at Cys189. Active-site residues include Asp278 and His280. Cys292 and Cys301 each carry S-nitrosocysteine. Residues Cys292 and Cys361 are joined by a disulfide bond. Ser316 and Ser383 each carry phosphoserine. The LIR signature appears at 388–391 (FEIL). Ser392 is subject to Phosphoserine.

It belongs to the peptidase C54 family. In terms of assembly, interacts with PFKP; promoting phosphorylation of ATG4B at Ser-34. Interacts with GBP7. Post-translationally, phosphorylation at Ser-383 and Ser-392 promotes autophagy by increasing protein delipidation activity without affecting proteolytic activation of ATG8 proteins. Phosphorylation at Ser-316 by ULK1 inhibits autophagy by decreasing both proteolytic activation and delipidation activities. Phosphorylation at Ser-316 is dephosphorylated by protein phosphatase 2A (PP2A). Phosphorylation at Ser-34 by AKT2 promotes its hydrolase activity, leading to increased proteolytic activation and delipidation of ATG8 family proteins. Phosphorylation at Ser-34 by AKT1 promotes mitochondrial localization and inhibition of the F1F0-ATP synthase activity, leading to elevation of mitochondrial reactive oxygen species (ROS). In terms of processing, ubiquitinated by RNF5, leading to its degradation by the proteasome. S-nitrosylation in response to high glucose decreases both proteolytic activation and delipidation activities. Post-translationally, O-glycosylated by OGT, leading to increase protease activity, thereby promoting the proteolytic activation of ATG8 family proteins. In terms of processing, forms reversible intrachain disulfide bonds in response to oxidative stress. Forms interchain disulfide bonds, leading to formation of homooligomers in response to oxidation.

It localises to the cytoplasm. It is found in the cytosol. The protein localises to the cytoplasmic vesicle. The protein resides in the autophagosome. Its subcellular location is the endoplasmic reticulum. It localises to the mitochondrion. It carries out the reaction [protein]-C-terminal L-amino acid-glycyl-phosphatidylethanolamide + H2O = [protein]-C-terminal L-amino acid-glycine + a 1,2-diacyl-sn-glycero-3-phosphoethanolamine. The catalysed reaction is [protein]-C-terminal L-amino acid-glycyl-phosphatidylserine + H2O = [protein]-C-terminal L-amino acid-glycine + a 1,2-diacyl-sn-glycero-3-phospho-L-serine. With respect to regulation, inhibited by N-ethylmaleimide. Redox-regulated during autophagy since reducing conditions activate ATG4A whereas an oxidizing environment such as the presence of H(2)O(2) inhibits its activity. The cysteine protease activity compounds is inhibited by styrylquinoline compounds 4-28 and LV-320. Cysteine protease that plays a key role in autophagy by mediating both proteolytic activation and delipidation of ATG8 family proteins. Required for canonical autophagy (macroautophagy), non-canonical autophagy as well as for mitophagy. The protease activity is required for proteolytic activation of ATG8 family proteins: cleaves the C-terminal amino acid of ATG8 proteins MAP1LC3A, MAP1LC3B, MAP1LC3C, GABARAPL1, GABARAPL2 and GABARAP, to reveal a C-terminal glycine. Exposure of the glycine at the C-terminus is essential for ATG8 proteins conjugation to phosphatidylethanolamine (PE) and insertion to membranes, which is necessary for autophagy. Protease activity is also required to counteract formation of high-molecular weight conjugates of ATG8 proteins (ATG8ylation): acts as a deubiquitinating-like enzyme that removes ATG8 conjugated to other proteins, such as ATG3. In addition to the protease activity, also mediates delipidation of ATG8 family proteins. Catalyzes delipidation of PE-conjugated forms of ATG8 proteins during macroautophagy. Also involved in non-canonical autophagy, a parallel pathway involving conjugation of ATG8 proteins to single membranes at endolysosomal compartments, by catalyzing delipidation of ATG8 proteins conjugated to phosphatidylserine (PS). Compared to other members of the family (ATG4A, ATG4C or ATG4C), constitutes the major protein for proteolytic activation of ATG8 proteins, while it displays weaker delipidation activity than other ATG4 paralogs. Involved in phagophore growth during mitophagy independently of its protease activity and of ATG8 proteins: acts by regulating ATG9A trafficking to mitochondria and promoting phagophore-endoplasmic reticulum contacts during the lipid transfer phase of mitophagy. The chain is Cysteine protease ATG4B from Rattus norvegicus (Rat).